A 514-amino-acid polypeptide reads, in one-letter code: Putative GTP-binding protein 6 (514 aa).

A disordered region spans residues 48 to 71 (WAGGGPVRGGGEEDPREDEEEEED). Positions 59 to 71 (EEDPREDEEEEED) are enriched in acidic residues. The Hflx-type G domain occupies 285–449 (PVVSVVGYTN…ALEASVLRAT (165 aa)). Mg(2+) contacts are provided by T298 and T319.

It belongs to the TRAFAC class OBG-HflX-like GTPase superfamily. HflX GTPase family. Requires Mg(2+) as cofactor.

The protein is Putative GTP-binding protein 6 (Gtpbp6) of Mus musculus (Mouse).